Here is a 1134-residue protein sequence, read N- to C-terminus: MSLTSAYQLKLAEKLTILNDRGQGVLIRMYNIKKTCSDSKSKPPFLLEKSMESCLKYINKKFPNIDVRNSTQHLGPVHREKAEIIRFLTNYYQSFVDVMEFRDHVYELLNTIDACQCHFDINLNFDFTRSYLDLIVTYTSVILLLSRIEDRRILIGMYNCAHEMLHGHSDPSFARLGQMVLEYDHPLKKLTEEFGPHTKAVSGALLSLHFLFVRRNQGAEQWRSAQLLSLISSPPAMINPANSDTMACEYLSVEVMERWIIIGFLLCHGCLNSNSQCQKLWKLCLEGSLYITLIREDVLQVHKVTEDLFSSLKGYSKRVADIKESKEHAITNSGQFHCQRRQFLRTAVKELETVLNDEPGLLGPKALFAFMALSFIRDEVTWLVRHTENVTKTKTPEDYADSSIAELLFLLEEIRALVRRHIKVIQQYHLQYLARFDVLVLSDIIQNLSVCPEEESVIMSSFVSILSSLNLKQVDNEEKFDFSGLRLDWFRLQAYTSVSKAPLHLHENPDLAKVMNLIIFHSQMLDSVEKMLVETSDLSTFCFHLRTFEKMFATTLEEPTMLRYTIAFPLICAHFVHCVHEMCPEEYPHLKNHGLHHCNSFLEDLAKQTSNCVLEICAEQRNLNEQLLPKHCATTISKAKNKKSMKQRQAPRKGEPERDKPGAESHRKNRSLVTNMDKLHLNLTELALAMNHVHSFSVFEHTIFPSEYLSSHLEARLNRAIVTLAGYNATTQEILRPSELLAGVKAYISFIQSLAQFLGADASRIVRNALLQQTQPLDSSGEQTVTTLYTNWYLESLLRQASSGAIVLSPAMQAFISLPRDGEQNFSAEEFSDISEMRALAEILGPYGMKFLSENLMWHVTSQIVELKKLVVENMDILVQIRSNFSKPELMASLLPQLTGAENVLKRMTIIGVILSFRAMAQEGLQEVFSAHCPFLMGPIECLKEFVTPDTDIKVTLSVFELACAAGVSCDIDPALVAAIANLKADNSSPEEEYKVACLLLIFLAVSLPLLATDPSSFFSIEKDGYNNNIHCLTKAIIQVSAALFTLYNKNIETHLKEFLVVASVSLLQLGQETDKLKTRNRESISLLMRLVVEESPFLTLDMLESCFPYVLLRNAYREVSRAFYLNRLPASSH.

The interval 638 to 671 is disordered; that stretch reads KAKNKKSMKQRQAPRKGEPERDKPGAESHRKNRS. The segment covering 639–651 has biased composition (basic residues); it reads AKNKKSMKQRQAP. The span at 652 to 666 shows a compositional bias: basic and acidic residues; that stretch reads RKGEPERDKPGAESH. The chain crosses the membrane as a helical span at residues 999–1019; sequence LLLIFLAVSLPLLATDPSSFF.

As to quaternary structure, in hematopoietic cells, component of the WAVE2 complex composed of ABI1, CYFIP1/SRA1, NCKAP1L/HEM1 and WASF2/WAVE2. Interacts with ARHGAP4, PIK3C3/VPS34 and PPP1R12A/MYPT1. Interacts with mammalian target of rapamycin complex 2 (mTORC2) components, including MTOR and RICTOR. Predominantly expressed in developing and mature hematopoietic cells. Also detected in urogenital tissues, including testis.

It localises to the membrane. The protein localises to the cytoplasm. Functionally, essential hematopoietic-specific regulator of the actin cytoskeleton. Controls lymphocyte development, activation, proliferation and homeostasis, erythrocyte membrane stability, as well as phagocytosis and migration by neutrophils and macrophages. Component of the WAVE2 complex which signals downstream of RAC to stimulate F-actin polymerization. Required for stabilization and/or translation of the WAVE2 complex proteins in hematopoietic cells. Within the WAVE2 complex, enables the cortical actin network to restrain excessive degranulation and granule release by T-cells. Required for efficient T-lymphocyte and neutrophil migration. Exhibits complex cycles of activation and inhibition to generate waves of propagating the assembly with actin. Also involved in mechanisms WAVE independent to regulate myosin and actin polymerization during neutrophil chemotaxis. In T-cells, required for proper mechanistic target of rapamycin complex 2 (mTORC2)-dependent AKT phosphorylation, cell proliferation and cytokine secretion, including that of IL2 and TNF. This Mus musculus (Mouse) protein is Nck-associated protein 1-like.